The primary structure comprises 223 residues: Ribonuclease T (223 aa).

The region spanning 20 to 194 (VVIDVETAGF…YDTNQTALLF (175 aa)) is the Exonuclease domain. Residues aspartate 23, glutamate 25, histidine 181, and aspartate 186 each contribute to the Mg(2+) site. Histidine 181 serves as the catalytic Proton donor/acceptor.

The protein belongs to the RNase T family. As to quaternary structure, homodimer. Requires Mg(2+) as cofactor.

In terms of biological role, trims short 3' overhangs of a variety of RNA species, leaving a one or two nucleotide 3' overhang. Responsible for the end-turnover of tRNA: specifically removes the terminal AMP residue from uncharged tRNA (tRNA-C-C-A). Also appears to be involved in tRNA biosynthesis. The sequence is that of Ribonuclease T from Pectobacterium atrosepticum (strain SCRI 1043 / ATCC BAA-672) (Erwinia carotovora subsp. atroseptica).